A 246-amino-acid polypeptide reads, in one-letter code: Small ribosomal subunit protein uS3 (246 aa).

Residues 23–94 (LNEFLTRELA…RIELYAEKVA (72 aa)) form the KH type-2 domain. A disordered region spans residues 201 to 246 (GPKKPLPDNVSVVEPKEEKIYETPETEYKIPPPSKPLDDLSEAKVL). Composition is skewed to basic and acidic residues over residues 214–228 (EPKE…ETEY) and 236–246 (PLDDLSEAKVL). A phosphothreonine mark is found at T223 and T226. S241 carries the post-translational modification Phosphoserine.

Belongs to the universal ribosomal protein uS3 family. As to quaternary structure, interacts with LTV1; the interaction is RNA-independent.

Its subcellular location is the cytoplasm. The protein localises to the nucleus. Its function is as follows. Has DNA repair activity directed towards the mutagenic lesions 8-oxoguanine and abasic sites in DNA. It can cleave DNA containing 8-oxoguanine residues efficiently. Also acts as an ap lyase, cleaving phosphodiester bonds via a beta,delta elimination reaction. This Drosophila melanogaster (Fruit fly) protein is Small ribosomal subunit protein uS3 (RpS3).